The sequence spans 309 residues: Protein US16 (309 aa).

7 helical membrane passes run 50–70 (GLLLFQISTAVAVLGSFSLVF), 85–105 (VVWAPEVLLLVPVASALFVYF), 128–148 (LVLLLAGLLAHIPALGVTCAC), 154–174 (VLTSFVLTLVITLLCAEVVFI), 185–205 (FALINGVWVVVFLANVLIVFT), 210–230 (WPLRLLLGFYSTVGLIFAGHF), and 245–265 (DVAHTSLQLFITFISLFFLIL).

The protein belongs to the cytomegalovirus US12 family.

The protein resides in the host membrane. It localises to the host cytoplasm. The protein is Protein US16 (US16) of Human cytomegalovirus (strain Merlin) (HHV-5).